Here is a 118-residue protein sequence, read N- to C-terminus: Large ribosomal subunit protein bL20 (118 aa).

The protein belongs to the bacterial ribosomal protein bL20 family.

In terms of biological role, binds directly to 23S ribosomal RNA and is necessary for the in vitro assembly process of the 50S ribosomal subunit. It is not involved in the protein synthesizing functions of that subunit. This chain is Large ribosomal subunit protein bL20, found in Pseudomonas aeruginosa (strain LESB58).